A 483-amino-acid polypeptide reads, in one-letter code: Leukocyte immunoglobulin-like receptor subfamily A member 2 (483 aa).

Residues 1–23 (MTPILTVLICLGLSLGPRTHVQA) form the signal peptide. At 24–449 (GHLPKPTLWA…QHPQDYTVEN (426 aa)) the chain is on the extracellular side. 4 consecutive Ig-like C2-type domains span residues 27–113 (PKPT…DPLE), 117–222 (TGAY…GVSK), 224–313 (PSLS…DPLD), and 324–413 (PSLS…SDPL). A disulfide bond links Cys49 and Cys97. N-linked (GlcNAc...) asparagine glycans are attached at residues Asn64, Asn103, and Asn138. Cystine bridges form between Cys143–Cys195 and Cys244–Cys295. Asn279, Asn300, and Asn339 each carry an N-linked (GlcNAc...) asparagine glycan. A disulfide bond links Cys344 and Cys395. Tyr404 is modified (3'-nitrotyrosine). Asn429 carries an N-linked (GlcNAc...) asparagine glycan. The chain crosses the membrane as a helical span at residues 450-470 (LIRMGVAGLVLVVLGILLFEA). Topologically, residues 471–483 (QHSQRSLQDAAGR) are cytoplasmic.

Homodimer. In terms of tissue distribution, detected on the surface of all peripheral blood monocytes, neutrophils, basophils and eosinophils (at protein level). Expression levels are very low or not detectable on monocytes, T-cells, B-cells, dendritic cells and natural killer (NK) cells.

The protein resides in the cell membrane. The protein localises to the secreted. Its function is as follows. Part of the innate immune responses against microbial infection. Specifically recognizes a set of N-terminally truncated immunoglobulins that are produced via cleavage by proteases from a range of pathogenic bacteria and fungi, including L.pneumophila, M.hyorhinis, S.pneumoniae, S.aureus and C.albicans. Recognizes epitopes that are in part in the variable region of the immunoglobulin light chains, but requires also the constant region for signaling. Binds to a subset of cleaved IgM, IgG3 and IgG4 molecules, but does not bind cleaved IgA1. Binding of N-terminally truncated immunoglobulins mediates activation of neutrophils. In monocytes, activation leads to the release of CSF2, CF3, IL6, CXCL8 and CCL3 and down-regulates responses to bacterial lipopolysaccharide (LPS), possibly via down-regulation of TLR4 expression and reduced signaling via TLR4. In eosinophils, activation by ligand binding leads to the release of RNASE2, IL4 and leukotriene C4. Does not bind class I MHC antigens. This Homo sapiens (Human) protein is Leukocyte immunoglobulin-like receptor subfamily A member 2 (LILRA2).